The primary structure comprises 172 residues: Shikimate kinase (172 aa).

Residue 11–16 (GTGKTA) participates in ATP binding. Position 15 (Thr-15) interacts with Mg(2+). Substrate is bound by residues Asp-33, Arg-57, and Gly-79. Arg-117 lines the ATP pocket. A substrate-binding site is contributed by Arg-136.

It belongs to the shikimate kinase family. Monomer. Mg(2+) serves as cofactor.

The protein localises to the cytoplasm. The enzyme catalyses shikimate + ATP = 3-phosphoshikimate + ADP + H(+). Its pathway is metabolic intermediate biosynthesis; chorismate biosynthesis; chorismate from D-erythrose 4-phosphate and phosphoenolpyruvate: step 5/7. Catalyzes the specific phosphorylation of the 3-hydroxyl group of shikimic acid using ATP as a cosubstrate. In Pelotomaculum thermopropionicum (strain DSM 13744 / JCM 10971 / SI), this protein is Shikimate kinase.